Consider the following 289-residue polypeptide: Glycine--tRNA ligase alpha subunit (289 aa).

This sequence belongs to the class-II aminoacyl-tRNA synthetase family. In terms of assembly, tetramer of two alpha and two beta subunits.

It localises to the cytoplasm. It carries out the reaction tRNA(Gly) + glycine + ATP = glycyl-tRNA(Gly) + AMP + diphosphate. This is Glycine--tRNA ligase alpha subunit from Rickettsia typhi (strain ATCC VR-144 / Wilmington).